A 349-amino-acid polypeptide reads, in one-letter code: Ion-translocating oxidoreductase complex subunit D (349 aa).

The next 3 membrane-spanning stretches (helical) occupy residues 37–57 (AFFG…ALSA), 73–90 (LSDN…VAIP), and 124–144 (AMAA…TWIA). Residue threonine 185 is modified to FMN phosphoryl threonine. 5 helical membrane passes run 212–232 (ATGV…LVLL), 239–259 (WHIS…GFLL), 265–285 (GSPL…FIAT), 291–311 (ATSP…VYII), and 315–335 (GGYP…APFI).

It belongs to the NqrB/RnfD family. In terms of assembly, the complex is composed of six subunits: RnfA, RnfB, RnfC, RnfD, RnfE and RnfG. FMN is required as a cofactor.

Its subcellular location is the cell inner membrane. In terms of biological role, part of a membrane-bound complex that couples electron transfer with translocation of ions across the membrane. This Shewanella sp. (strain W3-18-1) protein is Ion-translocating oxidoreductase complex subunit D.